We begin with the raw amino-acid sequence, 190 residues long: Glutamyl-tRNA(Gln) amidotransferase subunit F, mitochondrial (190 aa).

It belongs to the GatF family. As to quaternary structure, subunit of the heterotrimeric GatFAB amidotransferase (AdT) complex, composed of A, B and F subunits.

The protein resides in the mitochondrion inner membrane. The enzyme catalyses L-glutamyl-tRNA(Gln) + L-glutamine + ATP + H2O = L-glutaminyl-tRNA(Gln) + L-glutamate + ADP + phosphate + H(+). Allows the formation of correctly charged Gln-tRNA(Gln) through the transamidation of misacylated Glu-tRNA(Gln) in the mitochondria. The reaction takes place in the presence of glutamine and ATP through an activated gamma-phospho-Glu-tRNA(Gln). Required for proper protein synthesis within the mitochondrion. The chain is Glutamyl-tRNA(Gln) amidotransferase subunit F, mitochondrial from Eremothecium gossypii (strain ATCC 10895 / CBS 109.51 / FGSC 9923 / NRRL Y-1056) (Yeast).